We begin with the raw amino-acid sequence, 273 residues long: 3-methyl-2-oxobutanoate hydroxymethyltransferase (273 aa).

Residues Asp49 and Asp88 each coordinate Mg(2+). Residues 49–50, Asp88, and Lys118 each bind 3-methyl-2-oxobutanoate; that span reads DS. Residue Glu120 participates in Mg(2+) binding. Residue Glu187 is the Proton acceptor of the active site.

This sequence belongs to the PanB family. Homodecamer; pentamer of dimers. Mg(2+) serves as cofactor.

Its subcellular location is the cytoplasm. The catalysed reaction is 3-methyl-2-oxobutanoate + (6R)-5,10-methylene-5,6,7,8-tetrahydrofolate + H2O = 2-dehydropantoate + (6S)-5,6,7,8-tetrahydrofolate. The protein operates within cofactor biosynthesis; (R)-pantothenate biosynthesis; (R)-pantoate from 3-methyl-2-oxobutanoate: step 1/2. Catalyzes the reversible reaction in which hydroxymethyl group from 5,10-methylenetetrahydrofolate is transferred onto alpha-ketoisovalerate to form ketopantoate. The chain is 3-methyl-2-oxobutanoate hydroxymethyltransferase from Sinorhizobium medicae (strain WSM419) (Ensifer medicae).